The chain runs to 523 residues: Chitinase Chi52 (523 aa).

An N-terminal signal peptide occupies residues 1-30; sequence MNQAVRFRPVITFALAFLLLITWFAPRADA. Positions 80-101 are disordered; it reads GSGGETPTPDTAPPSVPAGLTS. The region spanning 95–180 is the Fibronectin type-III domain; the sequence is VPAGLTSSSI…TSLSVTTSNG (86 aa). In terms of domain architecture, GH18 spans 190-513; sequence KWLIGYWHNF…SAHRPFLNGL (324 aa). Glu-302 functions as the Proton donor in the catalytic mechanism.

It belongs to the glycosyl hydrolase 18 family. Chitinase class II subfamily.

It catalyses the reaction Random endo-hydrolysis of N-acetyl-beta-D-glucosaminide (1-&gt;4)-beta-linkages in chitin and chitodextrins.. Activity is inhibited by Cu(2+) and Co(2+), and almost completely inhibited by SDS. Its function is as follows. Acidic chitinase that displays a broad substrate specificity, showing the highest specific activity toward colloidal chitin, followed by ethylene glycol chitin and ball milled chitin, but exhibits no activity toward powdery chitin and chitosan. Hydrolyzes colloidal chitin and chitooligosaccharides with degree of polymerization 2-5 to release mainly N-acetyl chitobiose. Displays inhibition effects on the growth of some phytopathogenic fungi, including Alternaria alstroemeriae, Botrytis cinerea, Rhizoctonia solani, Sclerotinia sclerotiorum and Valsa mali. In Paenibacillus xylanexedens, this protein is Chitinase Chi52.